The primary structure comprises 193 residues: ATP-dependent Clp protease proteolytic subunit 1 (193 aa).

S98 acts as the Nucleophile in catalysis. H123 is an active-site residue.

It belongs to the peptidase S14 family. In terms of assembly, fourteen ClpP subunits assemble into 2 heptameric rings which stack back to back to give a disk-like structure with a central cavity, resembling the structure of eukaryotic proteasomes.

It is found in the cytoplasm. It carries out the reaction Hydrolysis of proteins to small peptides in the presence of ATP and magnesium. alpha-casein is the usual test substrate. In the absence of ATP, only oligopeptides shorter than five residues are hydrolyzed (such as succinyl-Leu-Tyr-|-NHMec, and Leu-Tyr-Leu-|-Tyr-Trp, in which cleavage of the -Tyr-|-Leu- and -Tyr-|-Trp bonds also occurs).. Cleaves peptides in various proteins in a process that requires ATP hydrolysis. Has a chymotrypsin-like activity. Plays a major role in the degradation of misfolded proteins. The polypeptide is ATP-dependent Clp protease proteolytic subunit 1 (Bacillus anthracis).